The sequence spans 73 residues: Large ribosomal subunit protein uL29 (73 aa).

Belongs to the universal ribosomal protein uL29 family.

The chain is Large ribosomal subunit protein uL29 (rpmC) from Aquifex aeolicus (strain VF5).